A 265-amino-acid chain; its full sequence is Lipopolysaccharide core heptose(I) kinase WaaP (265 aa).

Asp162 is an active-site residue.

Belongs to the protein kinase superfamily. KdkA/RfaP family. Requires Mg(2+) as cofactor.

Its subcellular location is the cell inner membrane. The enzyme catalyses an L-alpha-D-Hep-(1-&gt;3)-L-alpha-D-Hep-(1-&gt;5)-[alpha-Kdo-(2-&gt;4)]-alpha-Kdo-(2-&gt;6)-lipid A + ATP = an L-alpha-D-Hep-(1-&gt;3)-4-O-phospho-L-alpha-D-Hep-(1-&gt;5)-[alpha-Kdo-(2-&gt;4)]-alpha-Kdo-(2-&gt;6)-lipid A + ADP + H(+). It carries out the reaction L-alpha-D-Hep-(1-&gt;3)-L-alpha-D-Hep-(1-&gt;5)-[alpha-Kdo-(2-&gt;4)]-alpha-Kdo-(2-&gt;6)-lipid A (E. coli) + ATP = L-alpha-D-Hep-(1-&gt;3)-4-O-phospho-L-alpha-D-Hep-(1-&gt;5)-[alpha-Kdo-(2-&gt;4)]-alpha-Kdo-(2-&gt;6)-lipid A (E. coli) + ADP + H(+). It functions in the pathway bacterial outer membrane biogenesis; LPS core biosynthesis. Its function is as follows. Kinase involved in the biosynthesis of the core oligosaccharide region of lipopolysaccharide (LPS). Catalyzes the phosphorylation of heptose I (HepI), the first heptose added to the Kdo2-lipid A module. The chain is Lipopolysaccharide core heptose(I) kinase WaaP from Escherichia coli.